The chain runs to 262 residues: Small ribosomal subunit protein eS1 (262 aa).

Positions 1-18 (MAVGKNKRISKGKKGSKK) are enriched in basic residues. Residues 1–20 (MAVGKNKRISKGKKGSKKKT) are disordered.

Belongs to the eukaryotic ribosomal protein eS1 family. As to quaternary structure, component of the small ribosomal subunit. Mature ribosomes consist of a small (40S) and a large (60S) subunit. The 40S subunit contains about 33 different proteins and 1 molecule of RNA (18S). The 60S subunit contains about 49 different proteins and 3 molecules of RNA (25S, 5.8S and 5S).

Its subcellular location is the cytoplasm. The protein is Small ribosomal subunit protein eS1 of Oryza sativa subsp. japonica (Rice).